The primary structure comprises 725 residues: Dolichyl-phosphate-mannose--protein mannosyltransferase 5 (725 aa).

6 helical membrane passes run 34 to 54 (QFAVFSILLISLIRLYKLYIP), 117 to 137 (YLWLRLFSGICGIGHVLLTFF), 145 to 165 (SVISIVITILICLENSMVTVS), 192 to 212 (IPFTGCWYFNLFVTGIALGLN), 219 to 239 (GLFTFAWVGILTCVQLWEILG), and 256 to 276 (VVAFIMVPLTIYCSVFYIHFE). 3 MIR domains span residues 303–356 (PLQV…IETK), 368–427 (QREV…IRML), and 439–495 (LIKL…VESS). A glycan (N-linked (GlcNAc...) asparagine) is linked at Asn-409. The next 4 helical transmembrane spans lie at 570-590 (IYYLGNVAIYYSVFFVGLIAI), 619-639 (FYNNSWPYLVGWFINYIPYCL), 644-664 (LYLHHYLSALNFGILLLSQYL), and 673-693 (IIGGIITATIFVSAIYCFYEF).

The protein belongs to the glycosyltransferase 39 family.

The protein localises to the endoplasmic reticulum membrane. It catalyses the reaction a di-trans,poly-cis-dolichyl beta-D-mannosyl phosphate + L-seryl-[protein] = 3-O-(alpha-D-mannosyl)-L-seryl-[protein] + a di-trans,poly-cis-dolichyl phosphate + H(+). The enzyme catalyses a di-trans,poly-cis-dolichyl beta-D-mannosyl phosphate + L-threonyl-[protein] = 3-O-(alpha-D-mannosyl)-L-threonyl-[protein] + a di-trans,poly-cis-dolichyl phosphate + H(+). Its pathway is protein modification; protein glycosylation. In terms of biological role, protein mannosyltransferase (PMT) involved in hyphal morphogenesis and drug sensitivity. Transfers mannose from Dol-P-mannose to Ser or Thr residues on proteins. PMT1, PMT2 and PMT4 account for most of the protein-O-glycosylation activity, while PMT5 and PMT6 may specifically modulate a much narrower spectrum of target proteins. Required for biofilm formation. The chain is Dolichyl-phosphate-mannose--protein mannosyltransferase 5 from Candida albicans (strain SC5314 / ATCC MYA-2876) (Yeast).